The sequence spans 156 residues: Small ribosomal subunit protein uS7 (156 aa).

Belongs to the universal ribosomal protein uS7 family. In terms of assembly, part of the 30S ribosomal subunit. Contacts proteins S9 and S11.

One of the primary rRNA binding proteins, it binds directly to 16S rRNA where it nucleates assembly of the head domain of the 30S subunit. Is located at the subunit interface close to the decoding center, probably blocks exit of the E-site tRNA. The sequence is that of Small ribosomal subunit protein uS7 from Acidobacterium capsulatum (strain ATCC 51196 / DSM 11244 / BCRC 80197 / JCM 7670 / NBRC 15755 / NCIMB 13165 / 161).